The primary structure comprises 273 residues: Undecaprenyl-diphosphatase (273 aa).

The next 8 helical transmembrane spans lie at 4–24 (IELL…WLPI), 45–65 (FMSM…VVLF), 84–104 (TFTL…MIPF), 112–132 (FFNP…FIII), 149–169 (ITYQ…IPGT), 187–207 (YVAA…ASLL), 219–239 (AEIV…IIVI), and 251–271 (FKVF…YFLL).

It belongs to the UppP family.

The protein localises to the cell membrane. It catalyses the reaction di-trans,octa-cis-undecaprenyl diphosphate + H2O = di-trans,octa-cis-undecaprenyl phosphate + phosphate + H(+). Functionally, catalyzes the dephosphorylation of undecaprenyl diphosphate (UPP). Confers resistance to bacitracin. This chain is Undecaprenyl-diphosphatase, found in Lachnoclostridium phytofermentans (strain ATCC 700394 / DSM 18823 / ISDg) (Clostridium phytofermentans).